The sequence spans 484 residues: Glutamate--tRNA ligase (484 aa).

Residues Pro-11–Asn-21 carry the 'HIGH' region motif. A 'KMSKS' region motif is present at residues Lys-252 to Arg-256. Lys-255 contacts ATP.

Belongs to the class-I aminoacyl-tRNA synthetase family. Glutamate--tRNA ligase type 1 subfamily. Monomer.

It localises to the cytoplasm. It carries out the reaction tRNA(Glu) + L-glutamate + ATP = L-glutamyl-tRNA(Glu) + AMP + diphosphate. Catalyzes the attachment of glutamate to tRNA(Glu) in a two-step reaction: glutamate is first activated by ATP to form Glu-AMP and then transferred to the acceptor end of tRNA(Glu). The protein is Glutamate--tRNA ligase of Staphylococcus epidermidis (strain ATCC 35984 / DSM 28319 / BCRC 17069 / CCUG 31568 / BM 3577 / RP62A).